A 511-amino-acid polypeptide reads, in one-letter code: MTLVLKPGSVPLETLETIYREGLPVRIDPAFHAGVEKAAARIAEIAAGDEPVYGINTGFGKLASIRIAAGDVATLQRNLILSHCCGVGEPLSENIVRLIMALKLISLGRGASGVRLEVITLIEDMLKKGVIPMIPEKGSVGASGDLAPLAHMTAAMIGEGEAFYKGERLPSAKALEKAGLKPVVLAAKEGLALINGTQTSTALALAGLFRAHRAAQTALITGALSTDAAMGSDAPFHEEIHTLRGHKGQIDAGRALRALLEGSVIRQSHLEGDQRVQDPYCIRCQPQVDGACLDILRQAARTLEIEANAVTDNPLILSDGRAVSGGNFHAEPVAFAADQIALAVCEIGAISQRRIALLVDPALSFGLPAFLARKPGLNSGLMIAEVTSAALMSENKQMAHPASVDSTPTSANQEDHVSMACHGARRLLQMTANLNAIIGIEALTGALGVELREPLTTSPELAKVIAVLRGKVPTLEDDRYMADDLKNAAELVVDGALAGAVSSGILPSLEA.

The segment at residues 142–144 (ASG) is a cross-link (5-imidazolinone (Ala-Gly)). S143 carries the 2,3-didehydroalanine (Ser) modification.

It belongs to the PAL/histidase family. In terms of processing, contains an active site 4-methylidene-imidazol-5-one (MIO), which is formed autocatalytically by cyclization and dehydration of residues Ala-Ser-Gly.

It is found in the cytoplasm. The enzyme catalyses L-histidine = trans-urocanate + NH4(+). It functions in the pathway amino-acid degradation; L-histidine degradation into L-glutamate; N-formimidoyl-L-glutamate from L-histidine: step 1/3. The protein is Histidine ammonia-lyase of Brucella anthropi (strain ATCC 49188 / DSM 6882 / CCUG 24695 / JCM 21032 / LMG 3331 / NBRC 15819 / NCTC 12168 / Alc 37) (Ochrobactrum anthropi).